We begin with the raw amino-acid sequence, 83 residues long: Exodeoxyribonuclease 7 small subunit (83 aa).

The protein belongs to the XseB family. Heterooligomer composed of large and small subunits.

Its subcellular location is the cytoplasm. It catalyses the reaction Exonucleolytic cleavage in either 5'- to 3'- or 3'- to 5'-direction to yield nucleoside 5'-phosphates.. In terms of biological role, bidirectionally degrades single-stranded DNA into large acid-insoluble oligonucleotides, which are then degraded further into small acid-soluble oligonucleotides. This is Exodeoxyribonuclease 7 small subunit from Bradyrhizobium sp. (strain BTAi1 / ATCC BAA-1182).